Here is a 1074-residue protein sequence, read N- to C-terminus: Transmembrane protein 132E (1074 aa).

The first 23 residues, 1–23 (MAPGMSGRRGAALLCLSVLLAHA), serve as a signal peptide directing secretion. Residues 26–894 (RSHPASPSPP…LTDLEIGMYA (869 aa)) are Extracellular-facing. 2 N-linked (GlcNAc...) asparagine glycosylation sites follow: Asn-70 and Asn-91. 2 disordered regions span residues 205 to 224 (PAAPPSARRKSPDGLEPEAA) and 243 to 266 (GGCGSARRGPGPGPGAAARAESPT). The segment covering 247 to 262 (SARRGPGPGPGAAARA) has biased composition (low complexity). 2 N-linked (GlcNAc...) asparagine glycosylation sites follow: Asn-320 and Asn-401. 2 disordered regions span residues 564 to 587 (RRSARESEDEEEEEEERRQSANRG) and 816 to 867 (GRDE…PVPP). Over residues 843 to 854 (GAGPPGTAIPAG) the composition is skewed to low complexity. A helical transmembrane segment spans residues 895-915 (LLGVFCLAILVFLINCIVFVL). At 916-1074 (RYRHKRIPPE…NYMRRIKDIA (159 aa)) the chain is on the cytoplasmic side. The tract at residues 962–1064 (VPACCHGDHH…TRPTPPPDLH (103 aa)) is disordered. 2 stretches are compositionally biased toward low complexity: residues 973-985 (SGSSQTSVQSQVH) and 1016-1026 (FTTFTTLPTEE). Residues 1035 to 1044 (GEEEDEEEDL) show a composition bias toward acidic residues.

It belongs to the TMEM132 family. In terms of tissue distribution, widely expressed, with highest levels in the cochlea. In the cochlea, detected in spiral ganglion, the organ of Corti and stria vascularis. In the organ of Corti, prominently expressed in the outer and inner hair cells, especially at the apical and basal region of the outer hair cell body (at protein level).

It localises to the membrane. Functionally, required for normal inner ear hair cell function and hearing. This chain is Transmembrane protein 132E (Tmem132e), found in Mus musculus (Mouse).